Consider the following 417-residue polypeptide: Histidine biosynthesis bifunctional protein his7 (417 aa).

Residues 225-299 (GLVYSSKESV…HLDTLHCFGQ (75 aa)) are phosphoribosyl-AMP cyclohydrolase. Positions 303 to 387 (LCQLEKTLID…ISRHLDLKHR (85 aa)) are phosphoribosyl-ATP pyrophosphohydrolase.

It localises to the cytoplasm. It catalyses the reaction 1-(5-phospho-beta-D-ribosyl)-5'-AMP + H2O = 1-(5-phospho-beta-D-ribosyl)-5-[(5-phospho-beta-D-ribosylamino)methylideneamino]imidazole-4-carboxamide. The enzyme catalyses 1-(5-phospho-beta-D-ribosyl)-ATP + H2O = 1-(5-phospho-beta-D-ribosyl)-5'-AMP + diphosphate + H(+). It functions in the pathway amino-acid biosynthesis; L-histidine biosynthesis; L-histidine from 5-phospho-alpha-D-ribose 1-diphosphate: step 2/9. Its pathway is amino-acid biosynthesis; L-histidine biosynthesis; L-histidine from 5-phospho-alpha-D-ribose 1-diphosphate: step 3/9. This chain is Histidine biosynthesis bifunctional protein his7, found in Schizosaccharomyces pombe (strain 972 / ATCC 24843) (Fission yeast).